A 115-amino-acid chain; its full sequence is Con-Ins G1c (115 aa).

Positions 1–24 are cleaved as a signal peptide; it reads MTTSFYFLLMALGLLLYVCQSSFG. Positions 25 to 29 are excised as a propeptide; that stretch reads NQHTR. Position 34 is a 4-hydroxyproline; partial (Pro-34). Cystine bridges form between Cys-38–Cys-101, Cys-50–Cys-114, and Cys-100–Cys-105. Residue Glu-41 is modified to 4-carboxyglutamate. Positions 53-94 are cleaved as a propeptide — c peptide; sequence KRNDAGKKRGRASPLWQRRGSLSQLKARAKRNGAFHLPRDGR. Glu-98 is subject to 4-carboxyglutamate. Pro-104 carries the post-translational modification 4-hydroxyproline; partial. Position 109 is a 4-carboxyglutamate; partial (Glu-109).

Belongs to the insulin family. As to quaternary structure, heterodimer of A and B chains; disulfide-linked. In terms of processing, is different from Con-Ins G1a (AC A0A0B5AC95) due to absence of amidation at Cys-114. As to expression, expressed by the venom gland.

The protein resides in the secreted. Its function is as follows. This venom insulin, from a fish-hunting cone snail, facilitates prey capture by rapidly inducing hypoglycemic shock. It is one of the smallest known insulin found in nature and lacks the C-terminal segment of the B chain that, in human insulin, mediates engagement of the insulin receptor (INSR) and assembly of the hormone's hexameric storage form. Despite lacking this segment, it both binds and activates human insulin receptor (long isoform (HIR-B)) with only a 10-fold lower potency. In vivo, intraperitoneal injection of this peptide into zebrafish lowers blood glucose with the same potency than human insulin. In addition, when applied to water, this peptide reduces overall locomotor activity of zebrafish larvae, observed as a significant decrease in the percentage of time spent swimming and movement frequency. The protein is Con-Ins G1c of Conus geographus (Geography cone).